The sequence spans 504 residues: MEKFPGYLEFDGARQQSFLYPLFFREYIYVLAYDHGLNRLNRNRSFFLENTDYDKKYSSLIVKRLILRMYEQNRLIIPTKDLNQNSFLGHTSLFYYQMISVLFAVIVEIPFSKRLGSSFQGKQLKKSYNLQSIHSIFPFLEDKLAHFNCVLDVLIPYPIHLEILVQTLRYRVKDASSLHFFRFCLYEYCNWKNFDKKKKSILNPRFLLFLYNSHVCEYESIFFFLRKRSSHFRSTSYQVLFERILFYGKIQHFFKVFVNNFPAILGLLKDPFIHYVRYHGRCILATKDTPLLMNKWKYYFVNLWQCYFSLWFQSQKVNINQLSKDNLEFLGYLSSLRLNPLVVRSQMLENSFLIDNVRINLDSKIPISAIIGSLAKDKFCNVLGHPISKATWTDSSDSDILNRFVRICRNISHYYSGSSKKKNLYRIKYILRLCCVKTLARKHKSTVRAFLKRLGSGLLEEFLTGEDQVLSLIFPRSYYASKRLYRVRIWYLDIIYLNDLVNHE.

The protein belongs to the intron maturase 2 family. MatK subfamily.

It is found in the plastid. The protein localises to the chloroplast. Its function is as follows. Usually encoded in the trnK tRNA gene intron. Probably assists in splicing its own and other chloroplast group II introns. The sequence is that of Maturase K from Capsella bursa-pastoris (Shepherd's purse).